Consider the following 37-residue polypeptide: Large ribosomal subunit protein bL36 (37 aa).

The protein belongs to the bacterial ribosomal protein bL36 family.

The polypeptide is Large ribosomal subunit protein bL36 (Vibrio atlanticus (strain LGP32) (Vibrio splendidus (strain Mel32))).